The primary structure comprises 140 residues: FAD synthase (140 aa).

ATP is bound by residues 9–10 (TF), 14–17 (HPGH), and Asp-92.

It belongs to the archaeal FAD synthase family. As to quaternary structure, homodimer. A divalent metal cation is required as a cofactor.

The catalysed reaction is FMN + ATP + H(+) = FAD + diphosphate. The protein operates within cofactor biosynthesis; FAD biosynthesis; FAD from FMN: step 1/1. In terms of biological role, catalyzes the transfer of the AMP portion of ATP to flavin mononucleotide (FMN) to produce flavin adenine dinucleotide (FAD) coenzyme. This is FAD synthase from Natronomonas pharaonis (strain ATCC 35678 / DSM 2160 / CIP 103997 / JCM 8858 / NBRC 14720 / NCIMB 2260 / Gabara) (Halobacterium pharaonis).